We begin with the raw amino-acid sequence, 69 residues long: MAQELSEKELLKMEVEQLKKEVKNPRALISKTGKEIKDYVEAEAGNDPLLKGIPEDKNPFKEKGGCIIS.

Cys66 bears the Cysteine methyl ester mark. A lipid anchor (S-farnesyl cysteine) is attached at Cys66. Residues 67 to 69 (IIS) constitute a propeptide, removed in mature form.

The protein belongs to the G protein gamma family. As to quaternary structure, g proteins are composed of 3 units, alpha, beta and gamma.

It is found in the cell membrane. Guanine nucleotide-binding proteins (G proteins) are involved as a modulator or transducer in various transmembrane signaling systems. The beta and gamma chains are required for the GTPase activity, for replacement of GDP by GTP, and for G protein-effector interaction. The sequence is that of Guanine nucleotide-binding protein G(I)/G(S)/G(O) subunit gamma-T2 (GNGT2) from Bos taurus (Bovine).